A 102-amino-acid chain; its full sequence is ATP-dependent Clp protease adapter protein ClpS (102 aa).

The protein belongs to the ClpS family. As to quaternary structure, binds to the N-terminal domain of the chaperone ClpA.

Functionally, involved in the modulation of the specificity of the ClpAP-mediated ATP-dependent protein degradation. The polypeptide is ATP-dependent Clp protease adapter protein ClpS (Shewanella halifaxensis (strain HAW-EB4)).